The primary structure comprises 369 residues: Glutamate 5-kinase (369 aa).

K9 contacts ATP. Residues S49, D136, and N148 each contribute to the substrate site. ATP is bound by residues 168 to 169 (TD) and 210 to 216 (TGGMLTK). The PUA domain occupies 275-355 (QGSIWVDKGA…KGVLIYRDDW (81 aa)).

This sequence belongs to the glutamate 5-kinase family.

The protein localises to the cytoplasm. The catalysed reaction is L-glutamate + ATP = L-glutamyl 5-phosphate + ADP. It functions in the pathway amino-acid biosynthesis; L-proline biosynthesis; L-glutamate 5-semialdehyde from L-glutamate: step 1/2. Catalyzes the transfer of a phosphate group to glutamate to form L-glutamate 5-phosphate. This chain is Glutamate 5-kinase, found in Streptococcus pneumoniae (strain 70585).